We begin with the raw amino-acid sequence, 69 residues long: Parvalbumin beta 3 (69 aa).

Position 1 is an N-acetylalanine (alanine 1). The EF-hand domain maps to 24–59; sequence FNYKTFFKFFAIIDQDHSGFIEEEELKLFLQTFSAG. Ca(2+) is bound by residues aspartate 37, aspartate 39, serine 41, phenylalanine 43, glutamate 45, and glutamate 48.

This sequence belongs to the parvalbumin family.

Functionally, in muscle, parvalbumin is thought to be involved in relaxation after contraction. It binds two calcium ions. This is Parvalbumin beta 3 from Merluccius polli (Benguela hake).